Reading from the N-terminus, the 248-residue chain is PF03932 family protein CutC (248 aa).

Belongs to the CutC family. As to quaternary structure, homodimer.

The protein localises to the cytoplasm. This chain is PF03932 family protein CutC, found in Salmonella newport (strain SL254).